Here is a 393-residue protein sequence, read N- to C-terminus: Formate-dependent phosphoribosylglycinamide formyltransferase (393 aa).

N(1)-(5-phospho-beta-D-ribosyl)glycinamide is bound by residues 22–23 and Glu-82; that span reads EL. ATP contacts are provided by residues Arg-114, Lys-155, 160 to 165, 195 to 198, and Glu-203; these read SSGKGQ and EGFV. Residues 119-308 form the ATP-grasp domain; sequence RLAAEELGLP…EFALHVRAIL (190 aa). Residues Glu-267 and Glu-279 each contribute to the Mg(2+) site. N(1)-(5-phospho-beta-D-ribosyl)glycinamide-binding positions include Asp-286, Lys-356, and 363 to 364; that span reads RR.

This sequence belongs to the PurK/PurT family. Homodimer.

The catalysed reaction is N(1)-(5-phospho-beta-D-ribosyl)glycinamide + formate + ATP = N(2)-formyl-N(1)-(5-phospho-beta-D-ribosyl)glycinamide + ADP + phosphate + H(+). The protein operates within purine metabolism; IMP biosynthesis via de novo pathway; N(2)-formyl-N(1)-(5-phospho-D-ribosyl)glycinamide from N(1)-(5-phospho-D-ribosyl)glycinamide (formate route): step 1/1. In terms of biological role, involved in the de novo purine biosynthesis. Catalyzes the transfer of formate to 5-phospho-ribosyl-glycinamide (GAR), producing 5-phospho-ribosyl-N-formylglycinamide (FGAR). Formate is provided by PurU via hydrolysis of 10-formyl-tetrahydrofolate. The polypeptide is Formate-dependent phosphoribosylglycinamide formyltransferase (Nitratidesulfovibrio vulgaris (strain ATCC 29579 / DSM 644 / CCUG 34227 / NCIMB 8303 / VKM B-1760 / Hildenborough) (Desulfovibrio vulgaris)).